The sequence spans 151 residues: U1 small nuclear ribonucleoprotein C (151 aa).

The Matrin-type zinc finger occupies Tyr4–Phe36.

Belongs to the U1 small nuclear ribonucleoprotein C family. In terms of assembly, U1 snRNP is composed of the 7 core Sm proteins B/B', D1, D2, D3, E, F and G that assemble in a heptameric protein ring on the Sm site of the small nuclear RNA to form the core snRNP, and at least 3 U1 snRNP-specific proteins U1-70K, U1-A and U1-C. U1-C interacts with U1 snRNA and the 5' splice-site region of the pre-mRNA.

The protein localises to the nucleus. Component of the spliceosomal U1 snRNP, which is essential for recognition of the pre-mRNA 5' splice-site and the subsequent assembly of the spliceosome. U1-C is directly involved in initial 5' splice-site recognition for both constitutive and regulated alternative splicing. The interaction with the 5' splice-site seems to precede base-pairing between the pre-mRNA and the U1 snRNA. Stimulates commitment or early (E) complex formation by stabilizing the base pairing of the 5' end of the U1 snRNA and the 5' splice-site region. The protein is U1 small nuclear ribonucleoprotein C of Anopheles darlingi (Mosquito).